Reading from the N-terminus, the 432-residue chain is GRAM domain-containing protein 2B (432 aa).

Methionine 1 carries the post-translational modification N-acetylmethionine. Disordered stretches follow at residues 1–61 and 74–106; these read MTEL…SPDQ and DGAS…SSQY. Basic and acidic residues-rich tracts occupy residues 9–39 and 81–99; these read EDTK…EEKK and DKND…ERKK. Positions 110–177 constitute a GRAM domain; the sequence is MHFHKLFLSV…FSVTLIKKTK (68 aa). The span at 220 to 233 shows a compositional bias: polar residues; it reads TSVGNSPNPSSAEN. The interval 220–239 is disordered; sequence TSVGNSPNPSSAENSFRADR. 3 positions are modified to phosphoserine: serine 225, serine 242, and serine 252. Positions 262 to 285 are disordered; it reads RQDMEGYSSSGSQTPESENSRDFH. Positions 268–278 are enriched in polar residues; it reads YSSSGSQTPES.

The sequence is that of GRAM domain-containing protein 2B (GRAMD2B) from Homo sapiens (Human).